The following is a 93-amino-acid chain: Pyrimidine/purine nucleoside phosphorylase (93 aa).

The protein belongs to the nucleoside phosphorylase PpnP family.

It catalyses the reaction a purine D-ribonucleoside + phosphate = a purine nucleobase + alpha-D-ribose 1-phosphate. It carries out the reaction adenosine + phosphate = alpha-D-ribose 1-phosphate + adenine. The enzyme catalyses cytidine + phosphate = cytosine + alpha-D-ribose 1-phosphate. The catalysed reaction is guanosine + phosphate = alpha-D-ribose 1-phosphate + guanine. It catalyses the reaction inosine + phosphate = alpha-D-ribose 1-phosphate + hypoxanthine. It carries out the reaction thymidine + phosphate = 2-deoxy-alpha-D-ribose 1-phosphate + thymine. The enzyme catalyses uridine + phosphate = alpha-D-ribose 1-phosphate + uracil. The catalysed reaction is xanthosine + phosphate = alpha-D-ribose 1-phosphate + xanthine. Functionally, catalyzes the phosphorolysis of diverse nucleosides, yielding D-ribose 1-phosphate and the respective free bases. Can use uridine, adenosine, guanosine, cytidine, thymidine, inosine and xanthosine as substrates. Also catalyzes the reverse reactions. The sequence is that of Pyrimidine/purine nucleoside phosphorylase from Tolumonas auensis (strain DSM 9187 / NBRC 110442 / TA 4).